The chain runs to 701 residues: Polyribonucleotide nucleotidyltransferase (701 aa).

Mg(2+) contacts are provided by Asp-487 and Asp-493. The 60-residue stretch at 554–613 (PTMIAMKIDTDKIRDVIGKGGATIRAICEETKASIDIEDDGSIKIFGETKEAADAAKQRI) folds into the KH domain. The S1 motif domain occupies 623-691 (GKIYVGKVER…NRGRIKLSIK (69 aa)).

This sequence belongs to the polyribonucleotide nucleotidyltransferase family. Component of the RNA degradosome, which is a multiprotein complex involved in RNA processing and mRNA degradation. Requires Mg(2+) as cofactor.

The protein localises to the cytoplasm. The catalysed reaction is RNA(n+1) + phosphate = RNA(n) + a ribonucleoside 5'-diphosphate. In terms of biological role, involved in mRNA degradation. Catalyzes the phosphorolysis of single-stranded polyribonucleotides processively in the 3'- to 5'-direction. In Pseudomonas putida (Arthrobacter siderocapsulatus), this protein is Polyribonucleotide nucleotidyltransferase.